The primary structure comprises 227 residues: D-lyxose/D-mannose isomerase (227 aa).

Residues Lys90, 103-110 (HFHWRKRE), His171, Glu186, and Asp193 contribute to the D-fructose site. 4 residues coordinate Mn(2+): His103, His105, Glu110, and His171.

The protein belongs to the D-lyxose ketol-isomerase family. Homodimer; disulfide-linked. Dimerization is facilitated through a disulfide bond between the two monomers of the dimeric enzyme. Mn(2+) serves as cofactor.

The catalysed reaction is D-lyxose = D-xylulose. It catalyses the reaction D-mannose = D-fructose. In terms of biological role, sugar isomerase that catalyzes the reversible isomerization of D-lyxose to D-xylulose, and D-mannose to D-fructose. Shows similar activity toward D-lyxose and D-mannose with a turnover and catalytic efficiency for D-lyxose as a substrate only 1.1- and 1.3-fold higher than those for D-mannose, respectively. Shows weaker activity with L-gulose, D-talose, L-ribose and L-allose. Overexpression enables cell growth on the rare pentose D-lyxose as the sole carbon source. This is D-lyxose/D-mannose isomerase from Escherichia coli O157:H7.